Consider the following 724-residue polypeptide: Catalase-peroxidase (724 aa).

A cross-link (tryptophyl-tyrosyl-methioninium (Trp-Tyr) (with M-252)) is located at residues 98–226; it reads WHSAGSYRLA…LAAVQMGLIY (129 aa). Residue His99 is the Proton acceptor of the active site. The segment at residues 226 to 252 is a cross-link (tryptophyl-tyrosyl-methioninium (Tyr-Met) (with W-98)); the sequence is YVNPEGVNGKPDPLKTAAQVRTTFARM. His267 contacts heme b.

Belongs to the peroxidase family. Peroxidase/catalase subfamily. As to quaternary structure, homodimer or homotetramer. Heme b is required as a cofactor. In terms of processing, formation of the three residue Trp-Tyr-Met cross-link is important for the catalase, but not the peroxidase activity of the enzyme.

The catalysed reaction is H2O2 + AH2 = A + 2 H2O. The enzyme catalyses 2 H2O2 = O2 + 2 H2O. In terms of biological role, bifunctional enzyme with both catalase and broad-spectrum peroxidase activity. This is Catalase-peroxidase from Maricaulis maris (strain MCS10) (Caulobacter maris).